A 358-amino-acid polypeptide reads, in one-letter code: UDP-N-acetylglucosamine--N-acetylmuramyl-(pentapeptide) pyrophosphoryl-undecaprenol N-acetylglucosamine transferase (358 aa).

UDP-N-acetyl-alpha-D-glucosamine-binding positions include 13–15 (TGG), Asn125, Arg162, Ser190, Ile244, 263–268 (ALTVAE), and Gln289.

It belongs to the glycosyltransferase 28 family. MurG subfamily.

Its subcellular location is the cell inner membrane. It catalyses the reaction di-trans,octa-cis-undecaprenyl diphospho-N-acetyl-alpha-D-muramoyl-L-alanyl-D-glutamyl-meso-2,6-diaminopimeloyl-D-alanyl-D-alanine + UDP-N-acetyl-alpha-D-glucosamine = di-trans,octa-cis-undecaprenyl diphospho-[N-acetyl-alpha-D-glucosaminyl-(1-&gt;4)]-N-acetyl-alpha-D-muramoyl-L-alanyl-D-glutamyl-meso-2,6-diaminopimeloyl-D-alanyl-D-alanine + UDP + H(+). Its pathway is cell wall biogenesis; peptidoglycan biosynthesis. Its function is as follows. Cell wall formation. Catalyzes the transfer of a GlcNAc subunit on undecaprenyl-pyrophosphoryl-MurNAc-pentapeptide (lipid intermediate I) to form undecaprenyl-pyrophosphoryl-MurNAc-(pentapeptide)GlcNAc (lipid intermediate II). This is UDP-N-acetylglucosamine--N-acetylmuramyl-(pentapeptide) pyrophosphoryl-undecaprenol N-acetylglucosamine transferase from Halorhodospira halophila (strain DSM 244 / SL1) (Ectothiorhodospira halophila (strain DSM 244 / SL1)).